Reading from the N-terminus, the 202-residue chain is UPF0102 protein Dde_1093 (202 aa).

This sequence belongs to the UPF0102 family.

The sequence is that of UPF0102 protein Dde_1093 from Oleidesulfovibrio alaskensis (strain ATCC BAA-1058 / DSM 17464 / G20) (Desulfovibrio alaskensis).